A 296-amino-acid polypeptide reads, in one-letter code: Phosphatidylglycerol--prolipoprotein diacylglyceryl transferase (296 aa).

3 consecutive transmembrane segments (helical) span residues 17-37 (LAVRWYGLMYLVGFILAIVVG), 59-79 (MMFYGVLGVVLGGRLGYVLFY), and 97-117 (GGMSFHGGFLGVTLAMALFAW). Residue R142 coordinates a 1,2-diacyl-sn-glycero-3-phospho-(1'-sn-glycerol). 2 helical membrane passes run 230-250 (MGAISALFLIGYGAARFTVEF) and 265-285 (LSMGQWLSLPMIVAGVLMMIW).

The protein belongs to the Lgt family.

The protein localises to the cell inner membrane. The catalysed reaction is L-cysteinyl-[prolipoprotein] + a 1,2-diacyl-sn-glycero-3-phospho-(1'-sn-glycerol) = an S-1,2-diacyl-sn-glyceryl-L-cysteinyl-[prolipoprotein] + sn-glycerol 1-phosphate + H(+). Its pathway is protein modification; lipoprotein biosynthesis (diacylglyceryl transfer). In terms of biological role, catalyzes the transfer of the diacylglyceryl group from phosphatidylglycerol to the sulfhydryl group of the N-terminal cysteine of a prolipoprotein, the first step in the formation of mature lipoproteins. In Burkholderia mallei (strain NCTC 10247), this protein is Phosphatidylglycerol--prolipoprotein diacylglyceryl transferase.